A 435-amino-acid chain; its full sequence is GTPase Der (435 aa).

2 consecutive EngA-type G domains span residues 4–167 and 175–350; these read PIVA…SPDA and ISFS…ENKN. GTP-binding positions include 10–17, 57–61, 119–122, 181–188, 228–232, and 293–296; these read GQPNVGKS, DTGGI, NKAD, GRPNVGKS, DTAGI, and NKWD. A KH-like domain is found at 351–435; it reads QRIQSSVLND…PIKILPRKRK (85 aa).

This sequence belongs to the TRAFAC class TrmE-Era-EngA-EngB-Septin-like GTPase superfamily. EngA (Der) GTPase family. Associates with the 50S ribosomal subunit.

GTPase that plays an essential role in the late steps of ribosome biogenesis. The chain is GTPase Der from Lactobacillus delbrueckii subsp. bulgaricus (strain ATCC 11842 / DSM 20081 / BCRC 10696 / JCM 1002 / NBRC 13953 / NCIMB 11778 / NCTC 12712 / WDCM 00102 / Lb 14).